A 124-amino-acid polypeptide reads, in one-letter code: Large ribosomal subunit protein bL12 (124 aa).

The protein belongs to the bacterial ribosomal protein bL12 family. Homodimer. Part of the ribosomal stalk of the 50S ribosomal subunit. Forms a multimeric L10(L12)X complex, where L10 forms an elongated spine to which 2 to 4 L12 dimers bind in a sequential fashion. Binds GTP-bound translation factors.

Functionally, forms part of the ribosomal stalk which helps the ribosome interact with GTP-bound translation factors. Is thus essential for accurate translation. This is Large ribosomal subunit protein bL12 from Sulfurovum sp. (strain NBC37-1).